The primary structure comprises 327 residues: 2-oxoglutarate-dependent dioxygenase traH (327 aa).

A Fe2OG dioxygenase domain is found at 183-290 (TTDAAMFLKL…YAVPAFWHGD (108 aa)). Fe cation-binding residues include His-211, Asp-213, and His-270. Arg-280 contributes to the 2-oxoglutarate binding site.

This sequence belongs to the iron/ascorbate-dependent oxidoreductase family. Fe(2+) serves as cofactor.

Its pathway is secondary metabolite biosynthesis. Functionally, 2-oxoglutarate-dependent dioxygenase; part of the tra gene cluster that produces terrestric acid. The clavatol biosynthesis cluster cla and the terrestric acid cluster tra are both involved in the production of peniphenones and penilactones. The non-reducing PKS claF is responsible for the formation of clavatol from successive condensations of 3 malonyl-CoA units, presumably with a simple acetyl-CoA starter unit, and 2 methylation steps. The esterase claE probably collaborates with claF by catalyzing the hydrolysis of ACP-bound acyl intermediates to free the ACP from stalled intermediates. The clavatol oxidase claD then converts clavatol to hydroxyclavatol. Spontaneous dehydration of hydroxyclavatol leads to the accumulation of the highly active ortho-quinone methide. On the other hand, the PKS-NRPS hybrid traA is involved in the formation of crustosic acid, with the help of traB and traD. The polyketide synthase module (PKS) of traA is responsible for the synthesis of the polyketide backbone via the condensation of an acetyl-CoA starter unit with 3 malonyl-CoA units. The downstream nonribosomal peptide synthetase (NRPS) module then amidates the carboxyl end of the polyketide with L-malic acid. Because traA lacks a designated enoylreductase (ER) domain, the required activity is provided the enoyl reductase traG. Crustosic acid undergoes decarboxylation and isomerization to the terrestric acid, catalyzed by the 2-oxoglutarate-dependent dioxygenase traH. Both acids are further converted to the 2 gamma-butyrolactones (R)-5-methyltetronic acid and (S)-5-carboxylmethyltetronic acid, with involvement of the cytochrome P450 monooxygenase claJ. Spontaneous addition of the methide to these gamma-butyrolactones leads to peniphenone D and penilactone D, which undergo again stereospecific attacking by methide to give penilactones A and B. This chain is 2-oxoglutarate-dependent dioxygenase traH, found in Penicillium crustosum (Blue mold fungus).